We begin with the raw amino-acid sequence, 302 residues long: MIKLHEVPPEPVDPASLPHDVNAHSPEGDGNPDKRKKIFGIPYPFSRSSCRRFLWNCQKISVLPMALYFPLHAANTLITPAVSPDSAPDDVLMMVREILPSITTKLLVAGITLHVSAGVLLRIVNNWNKPRRNRHRHLKISAEQDLSQDSIGLTGGISGYLFGLYKTFRIPPQVISGYILVPVLIYHLLIMKWVPNSISTEVDFASIKQLLSSKNRWWKWLGGLVPLAILLESGVYHIGSGLCRYFGVRKMTSRKKWSTAINLLTLVGFVSLIRLMKEDSTKLGPNQFESIFKKIRLLLHVN.

A disordered region spans residues 1–35; it reads MIKLHEVPPEPVDPASLPHDVNAHSPEGDGNPDKR. Residues 1 to 61 are Cytoplasmic-facing; the sequence is MIKLHEVPPE…RFLWNCQKIS (61 aa). The PxP motif lies at 4–12; the sequence is LHEVPPEPV. The helical transmembrane segment at 62–82 threads the bilayer; the sequence is VLPMALYFPLHAANTLITPAV. Residues 83–100 lie on the Mitochondrial intermembrane side of the membrane; sequence SPDSAPDDVLMMVREILP. Residues 101-121 form a helical membrane-spanning segment; that stretch reads SITTKLLVAGITLHVSAGVLL. Over 122–173 the chain is Cytoplasmic; sequence RIVNNWNKPRRNRHRHLKISAEQDLSQDSIGLTGGISGYLFGLYKTFRIPPQ. A helical membrane pass occupies residues 174–194; it reads VISGYILVPVLIYHLLIMKWV. Topologically, residues 195–219 are mitochondrial intermembrane; sequence PNSISTEVDFASIKQLLSSKNRWWK. A helical membrane pass occupies residues 220-240; it reads WLGGLVPLAILLESGVYHIGS. Residues 241–258 lie on the Cytoplasmic side of the membrane; it reads GLCRYFGVRKMTSRKKWS. Residues 259 to 276 traverse the membrane as a helical segment; sequence TAINLLTLVGFVSLIRLM. The Mitochondrial intermembrane portion of the chain corresponds to 277–302; that stretch reads KEDSTKLGPNQFESIFKKIRLLLHVN.

Interacts (via PxP motif) with VPS13 (via SHR-BD domain).

The protein resides in the mitochondrion outer membrane. Functionally, recruits the lipid transfer protein Vps13 to mitochondria thereby promoting vacuole-mitochondria contacts. Involved in mitochondrial lipid homeostasis. This Saccharomyces cerevisiae (strain ATCC 204508 / S288c) (Baker's yeast) protein is Mitochondrial adapter protein MCP1.